Reading from the N-terminus, the 129-residue chain is MKEVIDTVGRRKTSVARVFMSPGKGRVIINKLPAEEYFRDEVKRQQALRPLALTEKMEDFDIKVNVHGGGVSGQTGAVSLAIARALTEFDESARAVLKKEKLLTRDPRMVERKKFGRKKARKRFQFSKR.

The protein belongs to the universal ribosomal protein uS9 family.

This chain is Small ribosomal subunit protein uS9, found in Chlorobium phaeobacteroides (strain DSM 266 / SMG 266 / 2430).